We begin with the raw amino-acid sequence, 62 residues long: Protein gp45.2 (62 aa).

May participate in replication-dependent transcriptional events during viral growth. The polypeptide is Protein gp45.2 (45.2) (Escherichia coli (Bacteriophage T4)).